The chain runs to 192 residues: Adenylate kinase (192 aa).

12–17 (GSGKTT) is an ATP binding site. Residues 34–63 (STGDLLRAEVASGSELGQTIKSYIDNGNLV) are NMP. AMP is bound by residues Thr35, Arg40, 61–63 (NLV), 88–91 (GFPR), and Gln95. The LID stretch occupies residues 130–136 (GRARGAD). Position 131 (Arg131) interacts with ATP. AMP is bound by residues Arg133 and Arg145. Residue Arg173 coordinates ATP.

The protein belongs to the adenylate kinase family. Monomer.

The protein resides in the cytoplasm. It catalyses the reaction AMP + ATP = 2 ADP. The protein operates within purine metabolism; AMP biosynthesis via salvage pathway; AMP from ADP: step 1/1. Functionally, catalyzes the reversible transfer of the terminal phosphate group between ATP and AMP. Plays an important role in cellular energy homeostasis and in adenine nucleotide metabolism. This chain is Adenylate kinase, found in Nautilia profundicola (strain ATCC BAA-1463 / DSM 18972 / AmH).